The primary structure comprises 297 residues: HTH-type transcriptional regulator AceR (297 aa).

Residues 1 to 60 enclose the HTH lysR-type domain; that stretch reads MNINQEQLLMFQAVMETGSFSAAARKLGKVPSAVSMSIANLEIDLNLTLFERKGREPTPT. A DNA-binding region (H-T-H motif) is located at residues 20–39; the sequence is FSAAARKLGKVPSAVSMSIA.

This sequence belongs to the LysR transcriptional regulatory family. As to quaternary structure, homodimer and homotetramer. Binding of chlorhexidine at the inducer-binding domain causes a quaternary structural change that favors interactions between dimers to form tetramers.

The protein localises to the cytoplasm. Regulates the expression of the AceI transporter. Binds DNA and chlorhexidine. Binds to regulatory sites within the intergenic region between the aceI and aceR genes, and affects the interaction between RNA polymerase (RNAP) and promoter DNA both in the presence and in the absence of chlorhexidine. In the absence of chlorhexidine, prevents transcription of the aceI gene by disrupting interactions between the promoter DNA and RNAP. In the presence of chlorhexidine, activates expression of aceI. When AceR interacts with chlorhexidine, it undergoes a conformational change and the tetrameric form either releases the DNA or shifts the position of the DNA-binding region to allow RNAP to bind onto the promoter DNA to proceed with aceI transcription. This chain is HTH-type transcriptional regulator AceR, found in Acinetobacter baumannii (strain ATCC 17978 / DSM 105126 / CIP 53.77 / LMG 1025 / NCDC KC755 / 5377).